The chain runs to 388 residues: Phosphopentomutase (388 aa).

Mn(2+) is bound by residues Asp10, Asp282, His287, Asp323, His324, and His335.

The protein belongs to the phosphopentomutase family. Mn(2+) is required as a cofactor.

It is found in the cytoplasm. It carries out the reaction 2-deoxy-alpha-D-ribose 1-phosphate = 2-deoxy-D-ribose 5-phosphate. It catalyses the reaction alpha-D-ribose 1-phosphate = D-ribose 5-phosphate. Its pathway is carbohydrate degradation; 2-deoxy-D-ribose 1-phosphate degradation; D-glyceraldehyde 3-phosphate and acetaldehyde from 2-deoxy-alpha-D-ribose 1-phosphate: step 1/2. Functionally, isomerase that catalyzes the conversion of deoxy-ribose 1-phosphate (dRib-1-P) and ribose 1-phosphate (Rib-1-P) to deoxy-ribose 5-phosphate (dRib-5-P) and ribose 5-phosphate (Rib-5-P), respectively. The polypeptide is Phosphopentomutase (Desulfitobacterium hafniense (strain DSM 10664 / DCB-2)).